The chain runs to 425 residues: MSTKWEKLEGNVGVLTIEVDAKEVNNSIDAAFKKVVKTINVPGFRKGKMPRPLFEQRFGIESLYQDALDIILPKAYGEAIDEAGIFPVAHPEIDIEKFEKGQNLIFTAKVTVKPEVKLGDYKGLAVEKVETTVTDEDVENEVKALQERQAELVVKEDGTAADGDTAVIDFEGFVDGEAFEGGKGENYSLAIGSGTFIPGFEEQVIGLKSGDSKEVEVSFPEEYHAAELAGKPATFKVTIHEIKTKELPELNDEFAKDADEEVATLDELKTKLRTNLEEGKKHEAEHKVRDEVVELAAANAEIDIPEAMIDTELDRMVREFEQRLSQQGMNLELYYQFTGTDADKLKEQMKEDAQKRVRINLVLEAIIEAENIEVTEEEVTAEVEKMAEMYGMPVDAIKQALGSVDALSEDLKVRKAVDFLVDNAA.

In terms of domain architecture, PPIase FKBP-type spans 163–248 (GDTAVIDFEG…IHEIKTKELP (86 aa)).

This sequence belongs to the FKBP-type PPIase family. Tig subfamily.

The protein resides in the cytoplasm. The catalysed reaction is [protein]-peptidylproline (omega=180) = [protein]-peptidylproline (omega=0). Involved in protein export. Acts as a chaperone by maintaining the newly synthesized protein in an open conformation. Functions as a peptidyl-prolyl cis-trans isomerase. In Bacillus mycoides (strain KBAB4) (Bacillus weihenstephanensis), this protein is Trigger factor.